Here is a 631-residue protein sequence, read N- to C-terminus: Probable electron transfer flavoprotein-ubiquinone oxidoreductase, mitochondrial (631 aa).

Position 65-79 (65-79 (VCIVGGGPAGLATAI)) interacts with FAD. The [4Fe-4S] cluster site is built by Cys574, Cys600, Cys603, and Cys606. The 30-residue stretch at 591-620 (TRLQINSQNCIHCKTCDIKAPRQDITWKVP) folds into the 4Fe-4S ferredoxin-type domain.

It belongs to the ETF-QO/FixC family. [4Fe-4S] cluster serves as cofactor. It depends on FAD as a cofactor.

It is found in the mitochondrion inner membrane. It carries out the reaction a ubiquinone + reduced [electron-transfer flavoprotein] = a ubiquinol + oxidized [electron-transfer flavoprotein] + H(+). Accepts electrons from ETF and reduces ubiquinone. The polypeptide is Probable electron transfer flavoprotein-ubiquinone oxidoreductase, mitochondrial (CIR2) (Saccharomyces cerevisiae (strain ATCC 204508 / S288c) (Baker's yeast)).